The primary structure comprises 299 residues: Pyridoxal 5'-phosphate synthase subunit PdxS (299 aa).

Asp-29 is a D-ribose 5-phosphate binding site. The active-site Schiff-base intermediate with D-ribose 5-phosphate is Lys-86. Position 158 (Gly-158) interacts with D-ribose 5-phosphate. Arg-170 lines the D-glyceraldehyde 3-phosphate pocket. D-ribose 5-phosphate is bound by residues Gly-219 and 240 to 241; that span reads GS.

This sequence belongs to the PdxS/SNZ family. In the presence of PdxT, forms a dodecamer of heterodimers.

It carries out the reaction aldehydo-D-ribose 5-phosphate + D-glyceraldehyde 3-phosphate + L-glutamine = pyridoxal 5'-phosphate + L-glutamate + phosphate + 3 H2O + H(+). Its pathway is cofactor biosynthesis; pyridoxal 5'-phosphate biosynthesis. Its function is as follows. Catalyzes the formation of pyridoxal 5'-phosphate from ribose 5-phosphate (RBP), glyceraldehyde 3-phosphate (G3P) and ammonia. The ammonia is provided by the PdxT subunit. Can also use ribulose 5-phosphate and dihydroxyacetone phosphate as substrates, resulting from enzyme-catalyzed isomerization of RBP and G3P, respectively. This is Pyridoxal 5'-phosphate synthase subunit PdxS from Protochlamydia amoebophila (strain UWE25).